The chain runs to 182 residues: Crossover junction endodeoxyribonuclease RuvC (182 aa).

Residues Asp-7, Glu-69, and Asp-141 contribute to the active site. Mg(2+)-binding residues include Asp-7, Glu-69, and Asp-141.

This sequence belongs to the RuvC family. As to quaternary structure, homodimer which binds Holliday junction (HJ) DNA. The HJ becomes 2-fold symmetrical on binding to RuvC with unstacked arms; it has a different conformation from HJ DNA in complex with RuvA. In the full resolvosome a probable DNA-RuvA(4)-RuvB(12)-RuvC(2) complex forms which resolves the HJ. It depends on Mg(2+) as a cofactor.

The protein localises to the cytoplasm. The catalysed reaction is Endonucleolytic cleavage at a junction such as a reciprocal single-stranded crossover between two homologous DNA duplexes (Holliday junction).. In terms of biological role, the RuvA-RuvB-RuvC complex processes Holliday junction (HJ) DNA during genetic recombination and DNA repair. Endonuclease that resolves HJ intermediates. Cleaves cruciform DNA by making single-stranded nicks across the HJ at symmetrical positions within the homologous arms, yielding a 5'-phosphate and a 3'-hydroxyl group; requires a central core of homology in the junction. The consensus cleavage sequence is 5'-(A/T)TT(C/G)-3'. Cleavage occurs on the 3'-side of the TT dinucleotide at the point of strand exchange. HJ branch migration catalyzed by RuvA-RuvB allows RuvC to scan DNA until it finds its consensus sequence, where it cleaves and resolves the cruciform DNA. The sequence is that of Crossover junction endodeoxyribonuclease RuvC from Polaromonas naphthalenivorans (strain CJ2).